The following is a 660-amino-acid chain: ATPase WRNIP1 (660 aa).

A UBZ4-type zinc finger spans residues 17–44; it reads QVQCPVCQQMMPAAHINSHLDRCLLLHP. The Zn(2+) site is built by Cys20, Cys23, His31, His35, and Cys39. A disordered region spans residues 48 to 191; the sequence is AEPAAGSHRA…DDPGHWDADA (144 aa). Residues Ser65 and Ser75 each carry the phosphoserine modification. The segment covering 76-89 has biased composition (polar residues); that stretch reads ESSALKQPATPTAA. A Glycyl lysine isopeptide (Lys-Gly) (interchain with G-Cter in ubiquitin) cross-link involves residue Lys81. Thr85 is subject to Phosphothreonine. Ser91 and Ser92 each carry phosphoserine. Positions 92 to 104 are enriched in acidic residues; it reads SEGEGEEGDDGGE. The residue at position 116 (Thr116) is a Phosphothreonine. A compositionally biased stretch (low complexity) spans 135 to 155; it reads ARKGMGKRPAAAAAAGSASPR. Lys141 participates in a covalent cross-link: Glycyl lysine isopeptide (Lys-Gly) (interchain with G-Cter in ubiquitin). Ser153 bears the Phosphoserine mark. Positions 159–182 are enriched in acidic residues; sequence EAEAQEEEEAGVDGDGDADVDGED. Lys220 is covalently cross-linked (Glycyl lysine isopeptide (Lys-Gly) (interchain with G-Cter in ubiquitin)). Residue 265 to 271 coordinates ATP; it reads PGCGKTT. Residues Lys296, Lys305, Lys311, Lys317, and Lys330 each participate in a glycyl lysine isopeptide (Lys-Gly) (interchain with G-Cter in ubiquitin) cross-link. Lys477 participates in a covalent cross-link: Glycyl lysine isopeptide (Lys-Gly) (interchain with G-Cter in SUMO2); alternate. Lys477 participates in a covalent cross-link: Glycyl lysine isopeptide (Lys-Gly) (interchain with G-Cter in ubiquitin); alternate. Phosphotyrosine occurs at positions 529 and 557. A Glycyl lysine isopeptide (Lys-Gly) (interchain with G-Cter in ubiquitin) cross-link involves residue Lys622. Lys628 participates in a covalent cross-link: Glycyl lysine isopeptide (Lys-Gly) (interchain with G-Cter in ubiquitin); alternate. An N6-acetyllysine; alternate modification is found at Lys628. Residue Lys631 forms a Glycyl lysine isopeptide (Lys-Gly) (interchain with G-Cter in ubiquitin) linkage.

This sequence belongs to the AAA ATPase family. RarA/MGS1/WRNIP1 subfamily. As to quaternary structure, forms homooligomers, possibly octamers. Directly interacts with POLD1, POLD2 and POLD4. Interacts with the N-terminal domain of WRN. Interacts (via UBZ4-type zinc finger) with monoubiquitin and polyubiquitin. Interacts with TRIM14 and PPP6C; these interactions positively regulate the RIGI signaling pathway. Sumoylated with SUMO1 and SUMO2/3. As to expression, ubiquitously expressed.

The protein localises to the nucleus. It localises to the cytoplasm. It catalyses the reaction ATP + H2O = ADP + phosphate + H(+). Functions as a modulator of initiation or reinitiation events during DNA polymerase delta-mediated DNA synthesis. In the presence of ATP, stimulation of DNA polymerase delta-mediated DNA synthesis is decreased. Also plays a role in the innate immune defense against viruses. Stabilizes the RIGI dsRNA interaction and promotes RIGI 'Lys-63'-linked polyubiquitination. In turn, RIGI transmits the signal through mitochondrial MAVS. This Mus musculus (Mouse) protein is ATPase WRNIP1.